The sequence spans 194 residues: Putative manganese efflux pump MntP (194 aa).

Helical transmembrane passes span 3-23, 37-57, 65-85, 112-132, 139-159, and 170-190; these read PITI…AAIG, LYVA…GWLL, IATF…IHMI, LAAT…SLAF, IVAA…VMLG, and AEIV…YEHL.

Belongs to the MntP (TC 9.B.29) family.

The protein localises to the cell inner membrane. Probably functions as a manganese efflux pump. This chain is Putative manganese efflux pump MntP, found in Xylella fastidiosa (strain 9a5c).